The chain runs to 786 residues: Toll-like receptor 1 (786 aa).

The N-terminal stretch at 1–24 (MTSIFHFAIIFMLILQIRIQLSEE) is a signal peptide. Residues 25 to 580 (SEFLVDRSKN…HMSELSCNIT (556 aa)) are Extracellular-facing. Residue Asn51 is glycosylated (N-linked (GlcNAc...) asparagine). LRR repeat units follow at residues 54-77 (QNYI…LIIS), 78-101 (HNRI…LDLS), 102-125 (HNKL…SFNA), 126-150 (FDAL…STTH), 151-175 (LEKS…GETY), 176-199 (GEKE…FPTN), 200-223 (KEFH…NIKC), 224-250 (VLED…SNLT), 251-278 (LNNI…YFSI), 279-308 (SNVK…HQVV), 309-337 (SDVF…SGTR), 338-361 (MVHM…NLLT), 362-388 (DTVF…KELS), 389-414 (KIAE…SYDE), 415-437 (KKGD…ILTD), 438-457 (TIFR…SNKI), 458-478 (KSIP…VAFN), 479-500 (SLTD…IDHN), and 501-524 (SVSH…AGDN). Cys110 and Cys132 are oxidised to a cystine. Asn137 and Asn163 each carry an N-linked (GlcNAc...) asparagine glycan. A disulfide bond links Cys223 and Cys230. The interval 313 to 316 (GFPQ) is interaction with bacterial lipopeptide. Asn330 carries an N-linked (GlcNAc...) asparagine glycan. An intrachain disulfide couples Cys343 to Cys368. Cys419 and Cys442 form a disulfide bridge. Asn429 carries N-linked (GlcNAc...) asparagine glycosylation. Residues 525 to 579 (PFQCTCELGEFVKNIDQVSSEVLEGWPDSYKCDYPESYRGTLLKDFHMSELSCNI) enclose the LRRCT domain. A glycan (N-linked (GlcNAc...) asparagine) is linked at Asn578. The chain crosses the membrane as a helical span at residues 581 to 601 (LLIVTIVATMLVLAVTVTSLC). The Cytoplasmic segment spans residues 602-786 (SYLDLPWYLR…NIKLTEQAKK (185 aa)). The TIR domain occupies 635 to 776 (LQFHAFISYS…LFWANLRAAI (142 aa)).

This sequence belongs to the Toll-like receptor family. In terms of assembly, interacts (via extracellular domain) with TLR2. TLR2 seems to exist in heterodimers with either TLR1 or TLR6 before stimulation by the ligand. The heterodimers form bigger oligomers in response to their corresponding ligands as well as further heterotypic associations with other receptors such as CD14 and/or CD36. The activation cluster TLR2:TLR1:CD14 forms in response to triacylated lipopeptides. Binds MYD88 (via TIR domain). Interacts with CNPY3. Interacts with neutrophil recruitment protein from Aedes aegypti saliva; the interaction probably promotes activation of canonical NF-kappa-B signaling in skin-resident macrophages and subsequent expression of neutrophil chemoattractants. Ubiquitous. Highly expressed in spleen, ovary, peripheral blood leukocytes, thymus and small intestine.

It is found in the cell membrane. It localises to the cytoplasmic vesicle. Its subcellular location is the phagosome membrane. The protein localises to the membrane raft. The protein resides in the golgi apparatus. Functionally, participates in the innate immune response to microbial agents. Specifically recognizes diacylated and triacylated lipopeptides. Cooperates with TLR2 to mediate the innate immune response to bacterial lipoproteins or lipopeptides. Forms the activation cluster TLR2:TLR1:CD14 in response to triacylated lipopeptides, this cluster triggers signaling from the cell surface and subsequently is targeted to the Golgi in a lipid-raft dependent pathway. Acts via MYD88 and TRAF6, leading to NF-kappa-B activation, cytokine secretion and the inflammatory response. The protein is Toll-like receptor 1 (TLR1) of Homo sapiens (Human).